The following is a 400-amino-acid chain: Subtilisin-like protease 7 (400 aa).

A signal peptide spans 1-20; the sequence is MGFITKAIPLALAAASVING. Residues 21 to 119 constitute a propeptide that is removed on maturation; that stretch reads AEILETRAGV…IERDARVQIN (99 aa). The Inhibitor I9 domain maps to 36–118; that stretch reads KYIVVMNDGI…YIERDARVQI (83 aa). The Peptidase S8 domain maps to 129–400; it reads SWGLARVGSK…SKLINNGSGM (272 aa). Active-site charge relay system residues include aspartate 161 and histidine 192. Asparagine 252 carries an N-linked (GlcNAc...) asparagine glycan. The active-site Charge relay system is serine 346. Asparagine 396 carries N-linked (GlcNAc...) asparagine glycosylation.

This sequence belongs to the peptidase S8 family.

The protein resides in the secreted. Its function is as follows. Secreted subtilisin-like serine protease with keratinolytic activity that contributes to pathogenicity. The protein is Subtilisin-like protease 7 (SUB7) of Trichophyton violaceum.